The sequence spans 146 residues: MTIQQWLFSFKGRIGRRDFWIWIGLWFAGMLVLFSLAGKNLLDIQTAAFCLVCLLWPTAAVTVKRLHDRGRSGAWAFLMIVAWMLLAGNWAILPGVWQWAVGRFVPTLILVMMLIDLGAFVGTQGENKYGKDTQDVKYKADNKSSN.

This is an uncharacterized protein from Escherichia coli O157:H7.